A 305-amino-acid polypeptide reads, in one-letter code: Endonuclease 1 (305 aa).

The signal sequence occupies residues 1–28 (MASAFRSSTRLILVLGILILCSVSSVRS). The a divalent metal cation site is built by W29 and H34. 29–34 (WSKEGH) contributes to the substrate binding site. C38 and C69 are oxidised to a cystine. D73 and H88 together coordinate a divalent metal cation. Residues 73–79 (DQIRHWY), 88–91 (HYID), and 98–103 (SYEYSR) each bind substrate. 3 disulfides stabilise this stretch: C97–C249, C105–C115, and C230–C236. N122 and Y139 together coordinate substrate. N122 is a glycosylation site (N-linked (GlcNAc...) asparagine). The N-linked (GlcNAc...) asparagine glycan is linked to N140. Positions 150, 154, 160, 184, and 188 each coordinate a divalent metal cation. Residues 150-199 (HFMGDIHQPMHVGFTSDEGGNTIDLRWYKHKSNLHHVWDREIILTALKEN) form a substrate binding region. Residue N214 is glycosylated (N-linked (GlcNAc...) asparagine). Positions 287-305 (MILNRVFSDDHAIAGVAAT) are cleaved as a propeptide — removed in mature form.

Belongs to the nuclease type I family. In terms of assembly, monomer. It depends on Mn(2+) as a cofactor. Ca(2+) serves as cofactor. Mostly expressed in flowers and during leaf and stem senescence, and, to a lower extent, detectable at low levels in roots, leaves, and stems. Particularly expressed in senescing tissues in a NAC92/ORE1-dependent manner.

The catalysed reaction is Endonucleolytic cleavage to 5'-phosphomononucleotide and 5'-phosphooligonucleotide end-products.. Functionally, endonuclease that can use RNA, single-stranded and double-stranded DNA as substrates. Hydrolyzes single-stranded DNA and RNA without apparent specificity for bases during senescence. Endonuclease that recognizes and cleaves all types of mismatches with high efficiency, including heteroduplex double-stranded DNA. Maybe involved in programmed cell death (PCD) and senescence. In Arabidopsis thaliana (Mouse-ear cress), this protein is Endonuclease 1.